The chain runs to 26 residues: Somatostatin-1 (26 aa).

Cysteine 15 and cysteine 26 form a disulfide bridge.

Belongs to the somatostatin family.

It localises to the secreted. Its function is as follows. Somatostatin inhibits the release of somatotropin. The protein is Somatostatin-1 (sst1) of Amia calva (Bowfin).